The sequence spans 292 residues: Homoserine kinase (292 aa).

ATP is bound at residue 81-91; the sequence is RPKSGLGSSGA.

It belongs to the GHMP kinase family. Homoserine kinase subfamily.

It is found in the cytoplasm. The catalysed reaction is L-homoserine + ATP = O-phospho-L-homoserine + ADP + H(+). Its pathway is amino-acid biosynthesis; L-threonine biosynthesis; L-threonine from L-aspartate: step 4/5. In terms of biological role, catalyzes the ATP-dependent phosphorylation of L-homoserine to L-homoserine phosphate. This Pyrococcus furiosus (strain ATCC 43587 / DSM 3638 / JCM 8422 / Vc1) protein is Homoserine kinase.